A 350-amino-acid chain; its full sequence is [LysW]-L-2-aminoadipate/[LysW]-L-glutamate phosphate reductase (350 aa).

10 to 13 contributes to the NADP(+) binding site; that stretch reads SGYT. Residue C150 is part of the active site. An NADP(+)-binding site is contributed by N317.

Belongs to the NAGSA dehydrogenase family. Type 1 subfamily. LysY sub-subfamily.

The protein localises to the cytoplasm. The enzyme catalyses [amino-group carrier protein]-C-terminal-N-(1-carboxy-5-oxopentan-1-yl)-L-glutamine + phosphate + NADP(+) = [amino-group carrier protein]-C-terminal-N-(1-carboxy-5-phosphooxy-5-oxopentan-1-yl)-L-glutamine + NADPH + H(+). The catalysed reaction is [amino-group carrier protein]-C-terminal-gamma-(L-glutamyl-5-semialdehyde)-L-glutamate + phosphate + NADP(+) = [amino-group carrier protein]-C-terminal-gamma-(5-phospho-L-glutamyl)-L-glutamate + NADPH + H(+). It functions in the pathway amino-acid biosynthesis; L-lysine biosynthesis via AAA pathway; L-lysine from L-alpha-aminoadipate (Thermus route): step 3/5. The protein operates within amino-acid biosynthesis; L-arginine biosynthesis. Its function is as follows. Involved in both the arginine and lysine biosynthetic pathways. This chain is [LysW]-L-2-aminoadipate/[LysW]-L-glutamate phosphate reductase, found in Sulfolobus acidocaldarius (strain ATCC 33909 / DSM 639 / JCM 8929 / NBRC 15157 / NCIMB 11770).